The chain runs to 157 residues: Endoribonuclease YbeY (157 aa).

Zn(2+) contacts are provided by histidine 114, histidine 118, and histidine 124.

This sequence belongs to the endoribonuclease YbeY family. Zn(2+) is required as a cofactor.

The protein resides in the cytoplasm. In terms of biological role, single strand-specific metallo-endoribonuclease involved in late-stage 70S ribosome quality control and in maturation of the 3' terminus of the 16S rRNA. This Klebsiella pneumoniae (strain 342) protein is Endoribonuclease YbeY.